The primary structure comprises 556 residues: 2-succinyl-5-enolpyruvyl-6-hydroxy-3-cyclohexene-1-carboxylate synthase (556 aa).

It belongs to the TPP enzyme family. MenD subfamily. Homodimer. Mg(2+) is required as a cofactor. The cofactor is Mn(2+). It depends on thiamine diphosphate as a cofactor.

The enzyme catalyses isochorismate + 2-oxoglutarate + H(+) = 5-enolpyruvoyl-6-hydroxy-2-succinyl-cyclohex-3-ene-1-carboxylate + CO2. It participates in quinol/quinone metabolism; 1,4-dihydroxy-2-naphthoate biosynthesis; 1,4-dihydroxy-2-naphthoate from chorismate: step 2/7. It functions in the pathway quinol/quinone metabolism; menaquinone biosynthesis. Catalyzes the thiamine diphosphate-dependent decarboxylation of 2-oxoglutarate and the subsequent addition of the resulting succinic semialdehyde-thiamine pyrophosphate anion to isochorismate to yield 2-succinyl-5-enolpyruvyl-6-hydroxy-3-cyclohexene-1-carboxylate (SEPHCHC). The protein is 2-succinyl-5-enolpyruvyl-6-hydroxy-3-cyclohexene-1-carboxylate synthase of Escherichia coli O17:K52:H18 (strain UMN026 / ExPEC).